The sequence spans 365 residues: Peptide chain release factor 1 (365 aa).

Q240 bears the N5-methylglutamine mark.

The protein belongs to the prokaryotic/mitochondrial release factor family. Methylated by PrmC. Methylation increases the termination efficiency of RF1.

It localises to the cytoplasm. Its function is as follows. Peptide chain release factor 1 directs the termination of translation in response to the peptide chain termination codons UAG and UAA. This Bifidobacterium animalis subsp. lactis (strain AD011) protein is Peptide chain release factor 1.